A 425-amino-acid chain; its full sequence is 2-methylserine hydroxymethyltransferase (425 aa).

(6S)-5,6,7,8-tetrahydrofolate-binding positions include Leu126 and 130–132 (GHL). At Lys235 the chain carries N6-(pyridoxal phosphate)lysine. (6S)-5,6,7,8-tetrahydrofolate is bound at residue Glu251.

This sequence belongs to the SHMT family. In terms of assembly, homodimer. Pyridoxal 5'-phosphate is required as a cofactor.

The protein resides in the cytoplasm. The enzyme catalyses (6R)-5,10-methylene-5,6,7,8-tetrahydrofolate + D-alanine + H2O = 2-methylserine + (6S)-5,6,7,8-tetrahydrofolate. It participates in one-carbon metabolism; tetrahydrofolate interconversion. Its function is as follows. Catalyzes the reversible interconversion of alpha-methyl-L-serine to D-alanine with tetrahydrofolate (THF) serving as the one-carbon carrier. Cannot use alpha-methyl-D-serine, L-serine, D-serine or L-alanine. The polypeptide is 2-methylserine hydroxymethyltransferase (Ensifer sp).